We begin with the raw amino-acid sequence, 568 residues long: Acetyl-coenzyme A carboxylase carboxyl transferase subunits beta/alpha (568 aa).

Residues 1 to 253 (MAEPARTLAQ…QTAEYLRDAG (253 aa)) form an acetyl-coenzyme A carboxylase carboxyl transferase subunit beta region. A CoA carboxyltransferase N-terminal domain is found at 21 to 290 (RWTRCPNCRS…APAAERGYRT (270 aa)). The carboxyltransferase stretch occupies residues 21 to 536 (RWTRCPNCRS…AAALRASIGE (516 aa)). Positions 25, 28, 44, and 47 each coordinate Zn(2+). The C4-type zinc finger occupies 25–47 (CPNCRSLVYLRRLRRNGHVCPDC). The tract at residues 254 to 559 (MVDLVVPRHE…RRRFDRFGDP (306 aa)) is acetyl-coenzyme A carboxylase carboxyl transferase subunit alpha. A CoA carboxyltransferase C-terminal domain is found at 286–536 (RGYRTRPRPA…AAALRASIGE (251 aa)).

The protein in the N-terminal section; belongs to the AccD/PCCB family. This sequence in the C-terminal section; belongs to the AccA family. As to quaternary structure, acetyl-CoA carboxylase is a heterotetramer composed of biotin carboxyl carrier protein (AccB), biotin carboxylase (AccC) and two subunits of ACCase subunit beta/alpha. The cofactor is Zn(2+).

It localises to the cytoplasm. The catalysed reaction is N(6)-carboxybiotinyl-L-lysyl-[protein] + acetyl-CoA = N(6)-biotinyl-L-lysyl-[protein] + malonyl-CoA. The protein operates within lipid metabolism; malonyl-CoA biosynthesis; malonyl-CoA from acetyl-CoA: step 1/1. In terms of biological role, component of the acetyl coenzyme A carboxylase (ACC) complex. Biotin carboxylase (BC) catalyzes the carboxylation of biotin on its carrier protein (BCCP) and then the CO(2) group is transferred by the transcarboxylase to acetyl-CoA to form malonyl-CoA. This Saccharopolyspora erythraea (strain ATCC 11635 / DSM 40517 / JCM 4748 / NBRC 13426 / NCIMB 8594 / NRRL 2338) protein is Acetyl-coenzyme A carboxylase carboxyl transferase subunits beta/alpha (accD).